A 131-amino-acid chain; its full sequence is Small ribosomal subunit protein uS8 (131 aa).

It belongs to the universal ribosomal protein uS8 family. In terms of assembly, part of the 30S ribosomal subunit. Contacts proteins S5 and S12.

In terms of biological role, one of the primary rRNA binding proteins, it binds directly to 16S rRNA central domain where it helps coordinate assembly of the platform of the 30S subunit. The protein is Small ribosomal subunit protein uS8 of Aromatoleum aromaticum (strain DSM 19018 / LMG 30748 / EbN1) (Azoarcus sp. (strain EbN1)).